Reading from the N-terminus, the 103-residue chain is Small ribosomal subunit protein uS10 (103 aa).

It belongs to the universal ribosomal protein uS10 family. Part of the 30S ribosomal subunit.

Its function is as follows. Involved in the binding of tRNA to the ribosomes. The polypeptide is Small ribosomal subunit protein uS10 (Xanthomonas axonopodis pv. citri (strain 306)).